The sequence spans 145 residues: Venom protein 30.1 (145 aa).

The N-terminal stretch at 1–18 (MIIVKLFTCLLMVSSVLT) is a signal peptide.

In terms of processing, contains 5 disulfide bonds. Expressed by the venom gland.

The protein resides in the secreted. The sequence is that of Venom protein 30.1 from Lychas mucronatus (Chinese swimming scorpion).